The chain runs to 183 residues: Heavy metal-associated isoprenylated plant protein 44 (183 aa).

The HMA domain maps to 50 to 113 (LQTVELKVRM…AVRRAGKRAE (64 aa)). Residues C61 and C64 each contribute to the a metal cation site. Residue C180 is modified to Cysteine methyl ester. A lipid anchor (S-farnesyl cysteine) is attached at C180. Positions 181–183 (RLM) are cleaved as a propeptide — removed in mature form.

Belongs to the HIPP family.

In terms of biological role, heavy-metal-binding protein. This Arabidopsis thaliana (Mouse-ear cress) protein is Heavy metal-associated isoprenylated plant protein 44.